The chain runs to 348 residues: Erlin-1 (348 aa).

Over 1–7 (MNMTQAR) the chain is Cytoplasmic. The chain crosses the membrane as a helical span at residues 8 to 28 (VLVAAVVGLVAVLLYASIHKI). Over 29–348 (EEGHLAVYYR…NLIQNKESTG (320 aa)) the chain is Lumenal. The N-linked (GlcNAc...) asparagine glycan is linked to asparagine 108. Residue lysine 269 is modified to N6-acetyllysine. A compositionally biased stretch (basic and acidic residues) spans 321–333 (TGRESSHPSKEAL). The tract at residues 321–348 (TGRESSHPSKEALEPSGENLIQNKESTG) is disordered. The segment covering 339-348 (NLIQNKESTG) has biased composition (polar residues).

The protein belongs to the band 7/mec-2 family. As to quaternary structure, forms a heteromeric complex with ERLIN2. In complex with ERLIN2, interacts with RNF170. Interacts with AMFR and SYVN1. Post-translationally, deubiquitinated by USP25; leading to stabilization.

The protein localises to the endoplasmic reticulum membrane. Its function is as follows. Component of the ERLIN1/ERLIN2 complex which mediates the endoplasmic reticulum-associated degradation (ERAD) of inositol 1,4,5-trisphosphate receptors (IP3Rs). Involved in regulation of cellular cholesterol homeostasis by regulation the SREBP signaling pathway. Binds cholesterol and may promote ER retention of the SCAP-SREBF complex. This Pongo abelii (Sumatran orangutan) protein is Erlin-1.